The sequence spans 560 residues: MVTWTQMYMPMGGLGLSALVALIPIIFFFVALAVLRLKGHVAGAITLILSILIAIFAFKMPIDMAFAAAGYGFIYGLWPIAWIIVAAVFLYKLTVASGQFDIIRSSVISITDDQRLQVLLIGFSFGALLEGAAGFGAPVAITGALLVGLGFKPLYAAGLCLIANTAPVAFGALGVPILVAGQVTGIDPFHIGAMAGRQLPFLSVLVPFWLVAMMDGWKGVKETWPAALVAGGSFAVTQFFTSNYIGPELPDITSALVSIVSLALFLKVWRPKNTETAISMGQSAGAMVVNKPSSGGPVPSEYSLGQIIRAWSPFLILTVLVTIWTMKPFKALFAPGGAFYSLVINFQIPHLHQQVLKAAPIVAQPTPMDAVFKFDPLSAGGTAIFIAAIISIFILGVGIKKGIGVFAETLISLKWPILSIGMVLAFAFVTNYSGMSTTLALVLAGTGVMFPFFSPFLGWLGVFLTGSDTSSNALFGSLQSTTAQQINVSDTLLVAANTSGGVTGKMISPQSIAVACAATGMVGRESELFRYTVKHSLIFASVIGIITLLQAYVFTGMLVS.

Residues 1–13 are Cytoplasmic-facing; sequence MVTWTQMYMPMGG. A helical membrane pass occupies residues 14 to 34; the sequence is LGLSALVALIPIIFFFVALAV. The Periplasmic portion of the chain corresponds to 35-41; sequence LRLKGHV. Residues 42–62 traverse the membrane as a helical segment; that stretch reads AGAITLILSILIAIFAFKMPI. The Cytoplasmic portion of the chain corresponds to 63–69; the sequence is DMAFAAA. The helical transmembrane segment at 70–90 threads the bilayer; it reads GYGFIYGLWPIAWIIVAAVFL. Over 91–130 the chain is Periplasmic; the sequence is YKLTVASGQFDIIRSSVISITDDQRLQVLLIGFSFGALLE. A helical membrane pass occupies residues 131–151; the sequence is GAAGFGAPVAITGALLVGLGF. Residues 152–158 lie on the Cytoplasmic side of the membrane; the sequence is KPLYAAG. The helical transmembrane segment at 159–179 threads the bilayer; it reads LCLIANTAPVAFGALGVPILV. At 180–199 the chain is on the periplasmic side; it reads AGQVTGIDPFHIGAMAGRQL. The helical transmembrane segment at 200-220 threads the bilayer; sequence PFLSVLVPFWLVAMMDGWKGV. Topologically, residues 221-225 are cytoplasmic; it reads KETWP. A helical transmembrane segment spans residues 226 to 246; it reads AALVAGGSFAVTQFFTSNYIG. The Periplasmic segment spans residues 247–248; that stretch reads PE. Residues 249 to 269 traverse the membrane as a helical segment; that stretch reads LPDITSALVSIVSLALFLKVW. At 270-313 the chain is on the cytoplasmic side; it reads RPKNTETAISMGQSAGAMVVNKPSSGGPVPSEYSLGQIIRAWSP. A helical membrane pass occupies residues 314-334; that stretch reads FLILTVLVTIWTMKPFKALFA. Residues 335–378 lie on the Periplasmic side of the membrane; it reads PGGAFYSLVINFQIPHLHQQVLKAAPIVAQPTPMDAVFKFDPLS. Residues 379–399 traverse the membrane as a helical segment; the sequence is AGGTAIFIAAIISIFILGVGI. Topologically, residues 400–408 are cytoplasmic; the sequence is KKGIGVFAE. A helical transmembrane segment spans residues 409–429; sequence TLISLKWPILSIGMVLAFAFV. At 430-438 the chain is on the periplasmic side; the sequence is TNYSGMSTT. The chain crosses the membrane as a helical span at residues 439–459; sequence LALVLAGTGVMFPFFSPFLGW. Topologically, residues 460–536 are cytoplasmic; sequence LGVFLTGSDT…ELFRYTVKHS (77 aa). Residues 537–557 form a helical membrane-spanning segment; that stretch reads LIFASVIGIITLLQAYVFTGM. Residues 558 to 560 lie on the Periplasmic side of the membrane; the sequence is LVS.

The protein belongs to the lactate permease family.

It localises to the cell inner membrane. The catalysed reaction is glycolate(in) + H(+)(in) = glycolate(out) + H(+)(out). It carries out the reaction (S)-lactate(in) + H(+)(in) = (S)-lactate(out) + H(+)(out). The enzyme catalyses (R)-lactate(in) + H(+)(in) = (R)-lactate(out) + H(+)(out). With respect to regulation, inhibited by the proton ionophore carbonyl cyanide m-chlorophenylhydrazone (CCCP). Functionally, uptake of glycolate across the membrane. Can also transport L-lactate and D-lactate. Seems to be driven by a proton motive force. The protein is Glycolate permease GlcA of Escherichia coli (strain K12).